Reading from the N-terminus, the 423-residue chain is Glucose-1-phosphate adenylyltransferase (423 aa).

Alpha-D-glucose 1-phosphate-binding positions include Tyr100, Gly165, 180–181 (EK), and Ser191.

The protein belongs to the bacterial/plant glucose-1-phosphate adenylyltransferase family. As to quaternary structure, homotetramer.

It catalyses the reaction alpha-D-glucose 1-phosphate + ATP + H(+) = ADP-alpha-D-glucose + diphosphate. The protein operates within glycan biosynthesis; glycogen biosynthesis. Its function is as follows. Involved in the biosynthesis of ADP-glucose, a building block required for the elongation reactions to produce glycogen. Catalyzes the reaction between ATP and alpha-D-glucose 1-phosphate (G1P) to produce pyrophosphate and ADP-Glc. This chain is Glucose-1-phosphate adenylyltransferase, found in Lachnospira eligens (strain ATCC 27750 / DSM 3376 / VPI C15-48 / C15-B4) (Eubacterium eligens).